The following is a 223-amino-acid chain: Nitrate reductase gamma chain (223 aa).

The chain crosses the membrane as a helical span at residues 2–27 (SGQILWGIMPYIVLTIFIGGHIYRYQ). Over 28–45 (HDQFGWTAKSSELLEKKK) the chain is Cytoplasmic. Residues 46–68 (LAAGSTLFHWGLLCVVGGHVMGI) form a helical membrane-spanning segment. Heme b contacts are provided by histidine 54 and histidine 64. Residues 69 to 81 (LIPEGVYASLGIS) lie on the Extracellular side of the membrane. Residues 82–111 (EHMYHKMAIGAGLPAGIAACTGLVILTYRR) traverse the membrane as a helical segment. Residues 112–123 (LFDKRIRKTSSP) are Cytoplasmic-facing. A helical membrane pass occupies residues 124 to 147 (SDILTLLLLLFMMLSGVAATFLNI). Over 148–180 (DSKGFDYRTTVGPWFREIVLFRPDASLMESVPL) the chain is Extracellular. The chain crosses the membrane as a helical span at residues 181–196 (WFKFHIVIGYVVFILW). Residues histidine 185 and histidine 203 each contribute to the heme b site. Residues 197 to 223 (PFTRLVHVFSLPLKYLTRSYVVYRKRS) lie on the Cytoplasmic side of the membrane.

It depends on heme as a cofactor.

The protein resides in the cell membrane. The enzyme catalyses nitrate + a quinol = a quinone + nitrite + H2O. Functionally, the gamma chain is a membrane-embedded heme-iron unit resembling cytochrome b, which transfers electrons from quinones to the beta subunit. In Bacillus subtilis (strain 168), this protein is Nitrate reductase gamma chain (narI).